Reading from the N-terminus, the 221-residue chain is Guanylate kinase (221 aa).

One can recognise a Guanylate kinase-like domain in the interval 20–199; it reads GLMFILSSPS…CFGKVREILA (180 aa). 27–34 provides a ligand contact to ATP; the sequence is SPSGAGKT.

The protein belongs to the guanylate kinase family.

It localises to the cytoplasm. The catalysed reaction is GMP + ATP = GDP + ADP. In terms of biological role, essential for recycling GMP and indirectly, cGMP. The sequence is that of Guanylate kinase from Novosphingobium aromaticivorans (strain ATCC 700278 / DSM 12444 / CCUG 56034 / CIP 105152 / NBRC 16084 / F199).